The sequence spans 435 residues: Glutamyl-tRNA reductase (435 aa).

Residues 49 to 52 (TCNR), serine 109, 114 to 116 (EGQ), and glutamine 120 contribute to the substrate site. The active-site Nucleophile is cysteine 50. 198–203 (GAGRMS) is a binding site for NADP(+).

It belongs to the glutamyl-tRNA reductase family. Homodimer.

The enzyme catalyses (S)-4-amino-5-oxopentanoate + tRNA(Glu) + NADP(+) = L-glutamyl-tRNA(Glu) + NADPH + H(+). The protein operates within porphyrin-containing compound metabolism; protoporphyrin-IX biosynthesis; 5-aminolevulinate from L-glutamyl-tRNA(Glu): step 1/2. It functions in the pathway porphyrin-containing compound metabolism; chlorophyll biosynthesis. In terms of biological role, catalyzes the NADPH-dependent reduction of glutamyl-tRNA(Glu) to glutamate 1-semialdehyde (GSA). This chain is Glutamyl-tRNA reductase, found in Prochlorococcus marinus (strain MIT 9515).